Reading from the N-terminus, the 412-residue chain is Esterase EstD (412 aa).

The first 20 residues, 1–20 (MRLTVFLSLFLGVMVFGAFD), serve as a signal peptide directing secretion. S243 (nucleophile) is an active-site residue. Active-site charge relay system residues include D347 and H378.

It belongs to the AB hydrolase superfamily. Esterase 10 family. As to quaternary structure, exists mainly as a monomer and, to some extent as a dimer.

It carries out the reaction a carboxylic ester + H2O = an alcohol + a carboxylate + H(+). Is strongly inhibited by phenylmethylsulfonyl fluoride, a serine protease inhibitor, and by mercury chloride. Diethyl pyrocarbonate, a histidine modifier, also inhibits the reaction, albeit less pronounced than phenylmethylsulfonyl fluoride. EDTA and dithiothreitol have no effect on enzyme activity. Functionally, exhibits significant esterase activity with a preference for short acyl chain esters (C4-C8) in vitro. Its physiological function is not known. Displays neither proteolytic activity using casein as substrate, nor peptidase activity when assayed with L-leucine p-nitroanilide and L-proline p-nitroanilide. The polypeptide is Esterase EstD (Thermotoga maritima (strain ATCC 43589 / DSM 3109 / JCM 10099 / NBRC 100826 / MSB8)).